Reading from the N-terminus, the 406-residue chain is 2,3-bisphosphoglycerate-independent phosphoglycerate mutase (406 aa).

Positions 156-183 (NLSDKISDSDPHSEGKPPEPIRPLDPSA) are disordered. Over residues 160-174 (KISDSDPHSEGKPPE) the composition is skewed to basic and acidic residues.

Belongs to the BPG-independent phosphoglycerate mutase family. A-PGAM subfamily.

It carries out the reaction (2R)-2-phosphoglycerate = (2R)-3-phosphoglycerate. Its pathway is carbohydrate degradation; glycolysis; pyruvate from D-glyceraldehyde 3-phosphate: step 3/5. Catalyzes the interconversion of 2-phosphoglycerate and 3-phosphoglycerate. The polypeptide is 2,3-bisphosphoglycerate-independent phosphoglycerate mutase (Thermoplasma volcanium (strain ATCC 51530 / DSM 4299 / JCM 9571 / NBRC 15438 / GSS1)).